Consider the following 338-residue polypeptide: Fructose-1,6-bisphosphatase class 1 1 (338 aa).

Positions 94, 116, 118, and 119 each coordinate Mg(2+). Residues Asp-119 to Ser-122, Asn-210, and Lys-276 contribute to the substrate site. Glu-282 is a Mg(2+) binding site.

This sequence belongs to the FBPase class 1 family. As to quaternary structure, homotetramer. The cofactor is Mg(2+).

It is found in the cytoplasm. The catalysed reaction is beta-D-fructose 1,6-bisphosphate + H2O = beta-D-fructose 6-phosphate + phosphate. The protein operates within carbohydrate biosynthesis; gluconeogenesis. The polypeptide is Fructose-1,6-bisphosphatase class 1 1 (Paraburkholderia phymatum (strain DSM 17167 / CIP 108236 / LMG 21445 / STM815) (Burkholderia phymatum)).